A 421-amino-acid polypeptide reads, in one-letter code: 4-hydroxy-3-methylbut-2-en-1-yl diphosphate synthase (flavodoxin) (421 aa).

4 residues coordinate [4Fe-4S] cluster: C298, C301, C344, and E351.

This sequence belongs to the IspG family. [4Fe-4S] cluster serves as cofactor.

The catalysed reaction is (2E)-4-hydroxy-3-methylbut-2-enyl diphosphate + oxidized [flavodoxin] + H2O + 2 H(+) = 2-C-methyl-D-erythritol 2,4-cyclic diphosphate + reduced [flavodoxin]. It functions in the pathway isoprenoid biosynthesis; isopentenyl diphosphate biosynthesis via DXP pathway; isopentenyl diphosphate from 1-deoxy-D-xylulose 5-phosphate: step 5/6. In terms of biological role, converts 2C-methyl-D-erythritol 2,4-cyclodiphosphate (ME-2,4cPP) into 1-hydroxy-2-methyl-2-(E)-butenyl 4-diphosphate. The chain is 4-hydroxy-3-methylbut-2-en-1-yl diphosphate synthase (flavodoxin) from Neisseria meningitidis serogroup C (strain 053442).